Here is a 443-residue protein sequence, read N- to C-terminus: Trimethylamine monooxygenase (443 aa).

Asp-37, Gln-39, Leu-45, and Trp-46 together coordinate FAD. Positions 70 and 72 each coordinate NADP(+). Residues Asn-72 and Val-125 each coordinate FAD. 5 residues coordinate NADP(+): Tyr-170, Ser-202, Ser-203, Ser-205, and Arg-226. FAD is bound by residues Gln-315 and Thr-318. Position 409 (Arg-409) interacts with NADP(+).

The protein belongs to the FMO family. It depends on FAD as a cofactor.

It catalyses the reaction trimethylamine + NADPH + O2 = trimethylamine N-oxide + NADP(+) + H2O. Catalyzes the oxidation of trimethylamine (TMA) to produce trimethylamine N-oxide (TMAO). In vitro, has a broad substrate specificity, oxidizing many nitrogen- and sulfur-containing compounds, including dimethylamine (DMA), dimethylsulfide (DMS) and dimethylsulfoxide (DMSO). The sequence is that of Trimethylamine monooxygenase from Pelagibacter ubique (strain HTCC1002).